Here is a 358-residue protein sequence, read N- to C-terminus: Putative purine permease 12 (358 aa).

The next 10 helical transmembrane spans lie at 29–49 (WILV…SVLL), 62–82 (WIST…LSLL), 100–120 (LVWI…LYSV), 128–148 (STYS…YYYI), 153–173 (ITCL…LVSL), 189–209 (LIGC…LSLM), 235–255 (VASC…LLSV), 280–299 (LGCV…FSNL), 300–316 (ISTL…IAVF), and 320–340 (LTEV…FYIY).

Belongs to the purine permeases (TC 2.A.7.14) family.

Its subcellular location is the membrane. In Arabidopsis thaliana (Mouse-ear cress), this protein is Putative purine permease 12 (PUP12).